The following is a 185-amino-acid chain: Ribosome-recycling factor (185 aa).

Belongs to the RRF family.

The protein resides in the cytoplasm. In terms of biological role, responsible for the release of ribosomes from messenger RNA at the termination of protein biosynthesis. May increase the efficiency of translation by recycling ribosomes from one round of translation to another. The sequence is that of Ribosome-recycling factor from Serratia proteamaculans (strain 568).